Consider the following 343-residue polypeptide: MNGSKKIYLGIGLVALLMIFIYWLMPKDTANASSQIESTNASAIIATSPGQQNQLSENTTPFGSVSQHDTQVNCQLQLNAANHLIVNEQTRNCFEYFLTQYGEKSLTQIDQDIKNYFTQSLPQPARDQAQDLWQRYLKYREELGNLKEPAIAKTDIAYYRAVFTSRQMLRQRFFSATEIAGLFGSEDIYNQYTLERMAILNNSKLSEIEKAKQLKALFDQLPQDWKANLEQLSKLDDLKQLTTSIKKNGGSAQELHDMRTNLVGHDATARLEQLDVERSNWKSNVTQYLDERQTILNSNMSDTAKQNAISALRSKNFTAPQDQIRVQAFESAKDQGQSLPFSE.

A helical membrane pass occupies residues 7-27 (IYLGIGLVALLMIFIYWLMPK).

Belongs to the lipase chaperone family.

The protein resides in the cell inner membrane. May be involved in the folding of the extracellular lipase during its passage through the periplasm. The sequence is that of Lipase chaperone (lifO) from Acinetobacter baylyi (strain ATCC 33305 / BD413 / ADP1).